A 438-amino-acid chain; its full sequence is MLKAVILIGGPQKGTRFRPLSLDTPKPLFPLAGRPLIAHHIEACAQLPDIREILIIGYYPQTQMEGFVGDMQALYSSSNINIRYLQEFTALGTAGGMYHFRDQIRAGNPRAFFVLNGDVCADFPLQELCDFHEKRPASALVTIMSTEATRQQSLHYGCLVFDRSSGAVSHYVEKPSSYVSTFINCGVYVCSMDIFTVLAQIFHSRGQEYSCQAFCNGNGNGNGREQGHIKWEQEVLTPLAGTDKLFAMPVPNWWSQLKTAGSAIYANRHYLGLYKKTHPERLANVGIKRGEGDGSLICTVHPDVYVHPSATVHHSAVLGPNVAIGPGVTIGPGVRIRESIVLEQAQILDHTLVLHSIVGRGSTIGAWARVEGTPSDPDPNKPFAKMENPPLFNNEGKLNPSITILGCFVQVPAEKILLNSIVLPHKELSRSFKNEIIL.

Residues 2-260 (LKAVILIGGP…PNWWSQLKTA (259 aa)) form a substrate-binding domain region. 2 residues coordinate GDP-alpha-D-mannose: Glu-87 and Gln-256. Positions 282–438 (LANVGIKRGE…SRSFKNEIIL (157 aa)) are hexapeptide repeat domain. The segment at 373-402 (TPSDPDPNKPFAKMENPPLFNNEGKLNPSI) is C-loop.

The protein belongs to the transferase hexapeptide repeat family. Component of the GMPPA-GMPPB mannose-1-phosphate guanylyltransferase complex composed of 4 GMPPA subunits and 8 GMPPB subunits; the complex is organized into three layers, a central layer made up of 2 GMPPA dimers sandwiched between two layers each made up of 2 GMPPB dimers.

Its function is as follows. Regulatory subunit of the GMPPA-GMPPB mannose-1-phosphate guanylyltransferase complex; reduces the catalytic activity of GMPPB when part of the complex. Mediates allosteric feedback inhibition of GMPPB catalytic activity upon binding GDP-alpha-D-mannose. Together with GMPPB regulates GDP-alpha-D-mannose levels. The sequence is that of Mannose-1-phosphate guanylyltransferase regulatory subunit alpha from Drosophila melanogaster (Fruit fly).